The chain runs to 380 residues: Cytochrome b (380 aa).

4 helical membrane passes run 34–54 (FGSL…LLAM), 78–99 (WLIR…YLHI), 114–134 (WNTG…GYVL), and 179–199 (FFAL…IHLT). Positions 84 and 98 each coordinate heme b. Heme b-binding residues include histidine 183 and histidine 197. Histidine 202 contributes to the a ubiquinone binding site. Transmembrane regions (helical) follow at residues 227–247 (TKDI…ALFS), 289–309 (LGGV…PLLH), 321–341 (LSQL…WIGS), and 348–368 (FIII…ILFP).

The protein belongs to the cytochrome b family. As to quaternary structure, the cytochrome bc1 complex contains 11 subunits: 3 respiratory subunits (MT-CYB, CYC1 and UQCRFS1), 2 core proteins (UQCRC1 and UQCRC2) and 6 low-molecular weight proteins (UQCRH/QCR6, UQCRB/QCR7, UQCRQ/QCR8, UQCR10/QCR9, UQCR11/QCR10 and a cleavage product of UQCRFS1). This cytochrome bc1 complex then forms a dimer. The cofactor is heme b.

The protein localises to the mitochondrion inner membrane. Its function is as follows. Component of the ubiquinol-cytochrome c reductase complex (complex III or cytochrome b-c1 complex) that is part of the mitochondrial respiratory chain. The b-c1 complex mediates electron transfer from ubiquinol to cytochrome c. Contributes to the generation of a proton gradient across the mitochondrial membrane that is then used for ATP synthesis. The chain is Cytochrome b (MT-CYB) from Pygoscelis antarcticus (Chinstrap penguin).